The chain runs to 717 residues: uncharacterized protein (717 aa).

This sequence belongs to the asfivirus C717R family.

The protein localises to the virion. This is an uncharacterized protein from Ornithodoros (relapsing fever ticks).